The sequence spans 93 residues: Large ribosomal subunit protein uL23 (93 aa).

This sequence belongs to the universal ribosomal protein uL23 family. Part of the 50S ribosomal subunit. Contacts protein L29, and trigger factor when it is bound to the ribosome.

Functionally, one of the early assembly proteins it binds 23S rRNA. One of the proteins that surrounds the polypeptide exit tunnel on the outside of the ribosome. Forms the main docking site for trigger factor binding to the ribosome. The chain is Large ribosomal subunit protein uL23 from Helicobacter pylori (strain P12).